The primary structure comprises 882 residues: MVVTTSARGGGGDRTPSRRRGCGLAPAGAAALLAGASCLCYGRSLQGEFVHDDVWAIVNNPDVRPGAPLRWGIFTNDFWGKGMAENTSHKSYRPLCVLTFKLNIFLTGMNPFYFHAVNIILHCLVTLVLMYTCDKTVFKNRGLAFVTALLFAVHPIHTEAVAGIVGRADVLACLLFLLAFLSYNRSLDQGCVGGSFPSTVSPFFLLLSLFLGTCAMLVKETGITVFGVCLVYDLFSLSNKQDKSSNGALCPRSPQQPGSPQPSSLPGHPHRENGKQQRFPHKGAWGGCHSPLPPEPKSSGFPVSPRAVWSMMRFLTYSYLLAFNVWLLLAPVTLCYDWQVGSIPLVETIWDMRNLATIFLAVVMALLSLHCLAAFKRLEHKEVLVGLLFLVFPFIPASNLFFRVGFVVAERVLYMPSMGYCILFVHGLSKLCTWLNRCGATTLIVSTVLLLLLFSWKTVKQNEIWLSRESLFRSGVQTLPHNAKVHYNYANFLKDQGRNKEAIYHYRTALKLYPRHASALNNLGTLTRDTAEAKMYYQRALQLHPQHNRALFNLGNLLKSQEKKEEAITLLKDSIKYGPEFADAYSSLASLLAEQERFKEAEEIYQTGIKNCPDSSDLHNNYGVFLVDTGLPEKAVAHYQQAIKLSPSHHVAMVNLGRLYRSLGENSMAEEWYKRALQVAHKAEILSPLGALYYNTGRYEEALQIYQEAAALQPSQRELRLALAQVLAVMGQTKEAEKMTNHIVSEETGCLECYRLLSAIYSKQENHDKALDAIDKALQLKPKDPKVISELFFTKGNQLREQNLLDKAFESYRVAVQLNPDQAQAWMNMGGIQHIKGKYVSARAYYERALQLVPDSKLLKENLAKLDRLEKRLQEVREKDQT.

Residues 1 to 20 are Cytoplasmic-facing; the sequence is MVVTTSARGGGGDRTPSRRR. The segment at 1–20 is disordered; it reads MVVTTSARGGGGDRTPSRRR. The helical transmembrane segment at 21-41 threads the bilayer; that stretch reads GCGLAPAGAAALLAGASCLCY. Over 42–110 the chain is Extracellular; it reads GRSLQGEFVH…KLNIFLTGMN (69 aa). N-linked (GlcNAc...) asparagine glycosylation is present at N86. Residues 111–131 traverse the membrane as a helical segment; the sequence is PFYFHAVNIILHCLVTLVLMY. At 132-137 the chain is on the cytoplasmic side; that stretch reads TCDKTV. Residues 138-157 form a helical membrane-spanning segment; that stretch reads FKNRGLAFVTALLFAVHPIH. Residues 158–160 lie on the Extracellular side of the membrane; that stretch reads TEA. Residues 161 to 181 form a helical membrane-spanning segment; the sequence is VAGIVGRADVLACLLFLLAFL. At 182–197 the chain is on the cytoplasmic side; it reads SYNRSLDQGCVGGSFP. The helical transmembrane segment at 198-218 threads the bilayer; it reads STVSPFFLLLSLFLGTCAMLV. The Extracellular segment spans residues 219–221; it reads KET. The chain crosses the membrane as a helical span at residues 222–238; that stretch reads GITVFGVCLVYDLFSLS. Over 239-313 the chain is Cytoplasmic; the sequence is NKQDKSSNGA…SPRAVWSMMR (75 aa). The disordered stretch occupies residues 246 to 277; it reads NGALCPRSPQQPGSPQPSSLPGHPHRENGKQQ. Over residues 251–267 the composition is skewed to low complexity; the sequence is PRSPQQPGSPQPSSLPG. A helical transmembrane segment spans residues 314–334; sequence FLTYSYLLAFNVWLLLAPVTL. Topologically, residues 335 to 354 are extracellular; the sequence is CYDWQVGSIPLVETIWDMRN. A helical transmembrane segment spans residues 355 to 375; the sequence is LATIFLAVVMALLSLHCLAAF. At 376–381 the chain is on the cytoplasmic side; sequence KRLEHK. A helical membrane pass occupies residues 382–402; that stretch reads EVLVGLLFLVFPFIPASNLFF. Position 403 (R403) is a topological domain, extracellular. A helical transmembrane segment spans residues 404-424; it reads VGFVVAERVLYMPSMGYCILF. The Cytoplasmic portion of the chain corresponds to 425–438; that stretch reads VHGLSKLCTWLNRC. The helical transmembrane segment at 439-459 threads the bilayer; that stretch reads GATTLIVSTVLLLLLFSWKTV. Residues 460–882 are Extracellular-facing; the sequence is KQNEIWLSRE…LQEVREKDQT (423 aa). TPR repeat units lie at residues 483–516, 517–547, 548–581, 582–615, 616–649, 650–682, 683–716, 751–784, 789–822, and 823–856; these read AKVH…YPRH, ASAL…HPQH, NRAL…GPEF, ADAY…CPDS, SDLH…SPSH, HVAM…VAHK, AEIL…QPSQ, LECY…KPKD, SELF…NPDQ, and AQAW…VPDS.

The protein belongs to the TMTC family. May interact with FAM168B.

Its subcellular location is the membrane. The protein localises to the endoplasmic reticulum. It carries out the reaction a di-trans,poly-cis-dolichyl beta-D-mannosyl phosphate + L-seryl-[protein] = 3-O-(alpha-D-mannosyl)-L-seryl-[protein] + a di-trans,poly-cis-dolichyl phosphate + H(+). It catalyses the reaction a di-trans,poly-cis-dolichyl beta-D-mannosyl phosphate + L-threonyl-[protein] = 3-O-(alpha-D-mannosyl)-L-threonyl-[protein] + a di-trans,poly-cis-dolichyl phosphate + H(+). It participates in protein modification; protein glycosylation. Functionally, transfers mannosyl residues to the hydroxyl group of serine or threonine residues. The 4 members of the TMTC family are O-mannosyl-transferases dedicated primarily to the cadherin superfamily, each member seems to have a distinct role in decorating the cadherin domains with O-linked mannose glycans at specific regions. Also acts as O-mannosyl-transferase on other proteins such as PDIA3. The polypeptide is Protein O-mannosyl-transferase TMTC1 (Homo sapiens (Human)).